Here is a 507-residue protein sequence, read N- to C-terminus: Glucose-6-phosphate 1-dehydrogenase (507 aa).

2 residues coordinate NADP(+): arginine 57 and lysine 168. Positions 198, 202, 236, and 255 each coordinate substrate. The active-site Proton acceptor is histidine 260. A substrate-binding site is contributed by lysine 356.

It belongs to the glucose-6-phosphate dehydrogenase family.

It carries out the reaction D-glucose 6-phosphate + NADP(+) = 6-phospho-D-glucono-1,5-lactone + NADPH + H(+). Its pathway is carbohydrate degradation; pentose phosphate pathway; D-ribulose 5-phosphate from D-glucose 6-phosphate (oxidative stage): step 1/3. Functionally, catalyzes the oxidation of glucose 6-phosphate to 6-phosphogluconolactone. In Chlamydia muridarum (strain MoPn / Nigg), this protein is Glucose-6-phosphate 1-dehydrogenase.